Consider the following 176-residue polypeptide: Shikimate kinase (176 aa).

ATP is bound at residue Gly-14 to Thr-19. Ser-18 contributes to the Mg(2+) binding site. The substrate site is built by Asp-36, Arg-60, and Gly-83. Arg-121 lines the ATP pocket. Arg-140 lines the substrate pocket.

Belongs to the shikimate kinase family. As to quaternary structure, monomer. Mg(2+) serves as cofactor.

It localises to the cytoplasm. The enzyme catalyses shikimate + ATP = 3-phosphoshikimate + ADP + H(+). The protein operates within metabolic intermediate biosynthesis; chorismate biosynthesis; chorismate from D-erythrose 4-phosphate and phosphoenolpyruvate: step 5/7. Catalyzes the specific phosphorylation of the 3-hydroxyl group of shikimic acid using ATP as a cosubstrate. This Francisella tularensis subsp. holarctica (strain FTNF002-00 / FTA) protein is Shikimate kinase.